The following is a 389-amino-acid chain: Glutamate 5-kinase (389 aa).

Lys-16 is an ATP binding site. Substrate contacts are provided by Ser-56, Asp-143, and Asn-155. Residue 175–176 (SD) coordinates ATP. The PUA domain maps to 281-358 (AGELHVDDGA…AEIETILGYP (78 aa)).

Belongs to the glutamate 5-kinase family.

Its subcellular location is the cytoplasm. It catalyses the reaction L-glutamate + ATP = L-glutamyl 5-phosphate + ADP. The protein operates within amino-acid biosynthesis; L-proline biosynthesis; L-glutamate 5-semialdehyde from L-glutamate: step 1/2. In terms of biological role, catalyzes the transfer of a phosphate group to glutamate to form L-glutamate 5-phosphate. This Rhizobium johnstonii (strain DSM 114642 / LMG 32736 / 3841) (Rhizobium leguminosarum bv. viciae) protein is Glutamate 5-kinase.